Consider the following 77-residue polypeptide: Large ribosomal subunit protein eL20 (77 aa).

Belongs to the eukaryotic ribosomal protein eL20 family. As to quaternary structure, part of the 50S ribosomal subunit. Binds 23S rRNA.

This Thermococcus kodakarensis (strain ATCC BAA-918 / JCM 12380 / KOD1) (Pyrococcus kodakaraensis (strain KOD1)) protein is Large ribosomal subunit protein eL20.